We begin with the raw amino-acid sequence, 273 residues long: MNNRVHQGHLARKRFGQNFLNDQFVIDSIVSAINPQKGQAMVEIGPGLAALTEPVGERLDQLTVIELDRDLAARLQTHPFLGPKLTIYQQDAMTFNFGELAEKMGQPLRVFGNLPYNISTPLMFHLFSYTDAIADMHFMLQKEVVNRLVAGPNSKAYGRLSVMAQYYCNVIPVLEVPPSAFTPPPKVDSAVVRLVPHATMPHPVKDVRVLSRITTEAFNQRRKTIRNSLGNLFSVEVLTGMGIDPAMRAENISVAQYCQMANYLAENATLQES.

S-adenosyl-L-methionine is bound by residues asparagine 18, leucine 20, glycine 45, glutamate 66, aspartate 91, and asparagine 113.

Belongs to the class I-like SAM-binding methyltransferase superfamily. rRNA adenine N(6)-methyltransferase family. RsmA subfamily.

The protein localises to the cytoplasm. It carries out the reaction adenosine(1518)/adenosine(1519) in 16S rRNA + 4 S-adenosyl-L-methionine = N(6)-dimethyladenosine(1518)/N(6)-dimethyladenosine(1519) in 16S rRNA + 4 S-adenosyl-L-homocysteine + 4 H(+). In terms of biological role, specifically dimethylates two adjacent adenosines (A1518 and A1519) in the loop of a conserved hairpin near the 3'-end of 16S rRNA in the 30S particle. May play a critical role in biogenesis of 30S subunits. This chain is Ribosomal RNA small subunit methyltransferase A, found in Escherichia coli (strain SE11).